Consider the following 328-residue polypeptide: UPF0324 membrane protein AF_1621 (328 aa).

11 consecutive transmembrane segments (helical) span residues 21-39 (LQML…IINL), 43-60 (ALEP…AGNL), 73-95 (YVPF…PYLG), 101-123 (IVAA…SSRL), 130-152 (SILL…SPLI), 162-184 (AIMI…AHYA), 191-213 (FAVL…QLFG), 223-240 (GIRI…SIIY), 245-267 (FYVP…YLPG), 271-293 (QALR…YTVN), and 305-327 (LFAS…GSGA).

Belongs to the UPF0324 family.

It is found in the cell membrane. In Archaeoglobus fulgidus (strain ATCC 49558 / DSM 4304 / JCM 9628 / NBRC 100126 / VC-16), this protein is UPF0324 membrane protein AF_1621.